A 462-amino-acid polypeptide reads, in one-letter code: Centrosomal protein of 55 kDa (462 aa).

The segment covering 1–11 (MSSRSPKDLIK) has biased composition (basic and acidic residues). A disordered region spans residues 1–25 (MSSRSPKDLIKSKWGSRPSSSKSDT). Positions 12–23 (SKWGSRPSSSKS) are enriched in low complexity. 2 coiled-coil regions span residues 50–185 (KVAN…QQWL) and 228–400 (YLQE…KQLH). Residues S96 and S99 each carry the phosphoserine modification. Residues 157–235 (ANCFNSSMNS…EGYLQEEKQK (79 aa)) form an interaction with TSG101 region. An interaction with PDCD6IP region spans residues 160-214 (FNSSMNSIHEKEMQLKDALEKNQQWLVYDQQREAYVKGLLAKIFELEKRTETAAA). A required for localization to the interphase centrosome and to the midbody during cytokinesis region spans residues 354-462 (QMQACTLDFE…LLVHVEYCMK (109 aa)). Residues S423 and S426 each carry the phosphoserine modification. A Phosphothreonine modification is found at T428. S434 is subject to Phosphoserine; by PLK1.

As to quaternary structure, homodimer. Interacts (phosphorylated on Ser-423 and Ser-426) with PLK1; the interaction is indirect via the MTMR3:MTMR4 heterooligomer, occurs during early mitosis, regulates the phosphorylation of CEP55 by PLK1 and its recruitment to the midbody where it can mediate cell abscission. Interacts with AKAP9/CG-NAP; the interaction occurs in interphase and is lost upon mitotic entry. Interacts with PCNT/Kendrin; the interaction occurs in interphase and is lost upon mitotic entry. Directly interacts with PDCD6IP; this interaction is required for PDCD6IP targeting to the midbody; CEP55 binds PDCD6IP in a 2:1 stoichiometry; PDCD6IP competes with TSG101 for the same binding site. Interacts with TSG101; TSG101 competes with PDCD6IP for the same binding site; interaction is required for cytokinesis. Interacts with MVB12A, VPS37B, VPS37C and VPS28. There is a hierachy of phosphorylation, where both Ser-423 and Ser-426 are phosphorylated at the onset of mitosis, prior to Ser-434. Phosphorylation at Ser-423 and Ser-426 is required for dissociation from the centrosome at the G2/M boundary. Phosphorylation at the 3 sites, Ser-423, Ser-426 and Ser-434, is required for protein function at the final stages of cell division to complete cytokinesis successfully.

The protein localises to the cytoplasm. It localises to the cytoskeleton. Its subcellular location is the microtubule organizing center. It is found in the centrosome. The protein resides in the centriole. The protein localises to the cleavage furrow. It localises to the midbody. Its subcellular location is the midbody ring. Its function is as follows. Plays a role in mitotic exit and cytokinesis. Recruits PDCD6IP and TSG101 to midbody during cytokinesis. Required for successful completion of cytokinesis. Not required for microtubule nucleation. Plays a role in the development of the brain and kidney. In Rattus norvegicus (Rat), this protein is Centrosomal protein of 55 kDa.